The sequence spans 117 residues: Large ribosomal subunit protein bL19 (117 aa).

It belongs to the bacterial ribosomal protein bL19 family.

Its function is as follows. This protein is located at the 30S-50S ribosomal subunit interface and may play a role in the structure and function of the aminoacyl-tRNA binding site. The sequence is that of Large ribosomal subunit protein bL19 from Shewanella pealeana (strain ATCC 700345 / ANG-SQ1).